Consider the following 292-residue polypeptide: Probable porphobilinogen deaminase (292 aa).

Cysteine 233 is subject to S-(dipyrrolylmethanemethyl)cysteine.

The protein belongs to the HMBS family. The cofactor is dipyrromethane.

The catalysed reaction is 4 porphobilinogen + H2O = hydroxymethylbilane + 4 NH4(+). It participates in porphyrin-containing compound metabolism; protoporphyrin-IX biosynthesis; coproporphyrinogen-III from 5-aminolevulinate: step 2/4. Functionally, tetrapolymerization of the monopyrrole PBG into the hydroxymethylbilane pre-uroporphyrinogen in several discrete steps. The chain is Probable porphobilinogen deaminase (hemC) from Methanocaldococcus jannaschii (strain ATCC 43067 / DSM 2661 / JAL-1 / JCM 10045 / NBRC 100440) (Methanococcus jannaschii).